The primary structure comprises 266 residues: Metallo-beta-lactamase VIM-1 (266 aa).

Residues 1–20 form the signal peptide; sequence MLKVISSLLVYMTASVMAVA. Zn(2+) is bound by residues H114, H116, D118, H179, C198, and H240.

Belongs to the metallo-beta-lactamase superfamily. Class-B beta-lactamase family. Monomer. It depends on Zn(2+) as a cofactor.

It localises to the periplasm. It catalyses the reaction a beta-lactam + H2O = a substituted beta-amino acid. Weakly inhibited by beta-lactamase-blocking agent sulbactam. Class B beta-lactamase which confers resistance to the beta-lactam antibiotics, including penicillins, cephalosporins and carbapenems. Acts via hydrolysis of the beta-lactam ring. Has penicillin-, cephalosporin- and carbapenem-hydrolyzing activities. The protein is Metallo-beta-lactamase VIM-1 of Pseudomonas aeruginosa (strain ATCC 15692 / DSM 22644 / CIP 104116 / JCM 14847 / LMG 12228 / 1C / PRS 101 / PAO1).